Reading from the N-terminus, the 506-residue chain is tRNA-2-methylthio-N(6)-dimethylallyladenosine synthase (506 aa).

Residues 14–132 (KSYEVRTYGC…LPVLLERARV (119 aa)) enclose the MTTase N-terminal domain. [4Fe-4S] cluster contacts are provided by cysteine 23, cysteine 61, cysteine 95, cysteine 169, cysteine 173, and cysteine 176. Positions 155–386 (RESAYAAWVS…ALQEQISWDE (232 aa)) constitute a Radical SAM core domain. The region spanning 388–456 (KKQVGRTLDV…PHHLLAEGTP (69 aa)) is the TRAM domain.

The protein belongs to the methylthiotransferase family. MiaB subfamily. Monomer. The cofactor is [4Fe-4S] cluster.

It is found in the cytoplasm. It catalyses the reaction N(6)-dimethylallyladenosine(37) in tRNA + (sulfur carrier)-SH + AH2 + 2 S-adenosyl-L-methionine = 2-methylsulfanyl-N(6)-dimethylallyladenosine(37) in tRNA + (sulfur carrier)-H + 5'-deoxyadenosine + L-methionine + A + S-adenosyl-L-homocysteine + 2 H(+). Functionally, catalyzes the methylthiolation of N6-(dimethylallyl)adenosine (i(6)A), leading to the formation of 2-methylthio-N6-(dimethylallyl)adenosine (ms(2)i(6)A) at position 37 in tRNAs that read codons beginning with uridine. This is tRNA-2-methylthio-N(6)-dimethylallyladenosine synthase from Streptomyces griseus subsp. griseus (strain JCM 4626 / CBS 651.72 / NBRC 13350 / KCC S-0626 / ISP 5235).